The following is a 332-amino-acid chain: Geranylgeranyl pyrophosphate synthase 2 (332 aa).

The isopentenyl diphosphate site is built by K55, R58, and H87. Residues D94 and D98 each contribute to the Mg(2+) site. R103 lines the dimethylallyl diphosphate pocket. R104 is a binding site for isopentenyl diphosphate. Dimethylallyl diphosphate contacts are provided by K181, T182, and Q218. D221 contacts Mg(2+). Residues N225, K235, and K245 each contribute to the dimethylallyl diphosphate site.

This sequence belongs to the FPP/GGPP synthase family. Mg(2+) is required as a cofactor.

It catalyses the reaction isopentenyl diphosphate + dimethylallyl diphosphate = (2E)-geranyl diphosphate + diphosphate. The catalysed reaction is isopentenyl diphosphate + (2E)-geranyl diphosphate = (2E,6E)-farnesyl diphosphate + diphosphate. It carries out the reaction isopentenyl diphosphate + (2E,6E)-farnesyl diphosphate = (2E,6E,10E)-geranylgeranyl diphosphate + diphosphate. Its function is as follows. Geranylgeranyl pyrophosphate synthase; part of the gene cluster 3 that mediates the biosynthesis of an isoprenoid secondary metabolite. The protein is Geranylgeranyl pyrophosphate synthase 2 (GGS2) of Zymoseptoria tritici (strain CBS 115943 / IPO323) (Speckled leaf blotch fungus).